A 546-amino-acid polypeptide reads, in one-letter code: U3 small nucleolar RNA-associated protein 18 homolog (546 aa).

Disordered stretches follow at residues 1–55, 94–118, and 177–205; these read MSLS…LEES, SAVRQIPDYEDDGDDDEELSDEENG, and NPGTDWARPDSQIVDGESSDDDDTQDGGV. The span at 13–23 shows a compositional bias: basic and acidic residues; the sequence is IKREELKKQYE. Residues 24 to 35 show a composition bias toward acidic residues; the sequence is DVEDEEEIGSDD. Residue S33 is modified to Phosphoserine. Over residues 45–55 the composition is skewed to basic and acidic residues; the sequence is TEKEKQKLEES. Acidic residues-rich tracts occupy residues 101–117 and 193–205; these read DYEDDGDDDEELSDEEN and ESSDDDDTQDGGV. 4 WD repeats span residues 242 to 281, 372 to 411, 413 to 454, and 509 to 545; these read PSNGPINSVHFHQNAQLLLTAGLDRRLRFFQIDGKRNTKI, KMNGSVRSLAFSEDGKHLLSSGGDGQVYVWDLRTMKCLYK, VDEG…GGKR, and STMHYPRCLDFSPGSGFMAMGNAAGKVLLYKLHHYQN. The DWD box motif lies at 389–404; that stretch reads LLSSGGDGQVYVWDLR.

Belongs to the WD repeat UTP18 family.

Its subcellular location is the nucleus. It localises to the nucleolus. Involved in nucleolar processing of pre-18S ribosomal RNA. The polypeptide is U3 small nucleolar RNA-associated protein 18 homolog (Arabidopsis thaliana (Mouse-ear cress)).